The sequence spans 187 residues: MSAKQGWEKKSTNIDIASRKGMNVNNLSEHLQNLISSDSELGSRLLSLLLVSSGNAEELISMINNGQDVSQFKKLREPRKGKVAATTAVVVKEEEAPVSTSNELDKIKQERRRKNTEASQRFRIRKKQKNFENMNKLQNLNTQINKLRDRIEQLNKENEFWKAKLNDINEIKSLKLLNDIKRRNMGR.

In terms of domain architecture, bZIP spans 105–168; the sequence is DKIKQERRRK…EFWKAKLNDI (64 aa). Residues 106 to 136 form a basic motif region; that stretch reads KIKQERRRKNTEASQRFRIRKKQKNFENMNK. Residues 137–151 form a leucine-zipper region; that stretch reads LQNLNTQINKLRDRI.

It belongs to the bZIP family. In terms of assembly, interacts with MET4 to form a heteromeric complex which also includes CBF1. Forms two alternate complexes associating MET28 with MET4 and either MET31 or MET32. Binds to DNA through the MET4-MET28-CBF1 complex.

Its subcellular location is the cytoplasm. It localises to the nucleus. Acts as an accessory factor in the activation of sulfur amino acids metabolism genes. Possesses no intrinsic transcription activation abilities. Binds to the MET16 promoter as a complex with MET4 and CBF1. Enhances the DNA-binding activity of CBF1. The sequence is that of Transcriptional activator of sulfur metabolism MET28 (MET28) from Saccharomyces cerevisiae (strain ATCC 204508 / S288c) (Baker's yeast).